Here is a 294-residue protein sequence, read N- to C-terminus: MFTIEVLAQKLAPHASFLGGLVVAAILGLFIFFQEKDRKVLDPVEWRSFKLVDKDHLSHNTALYRFALPRASDSLGLPIGQHISVAAEINGKQVVRSYTPTTLDDDKGHFDLVVKTYEKGNISRYLSLLTIGQEIKVKGPKGKFVYTPNMAPHLVMIAGGTGITPMYQIIKSSIKTPGDKTRLSLIYANIQEDDILLKKEIDELQAKSNGRFDVKYVLNNPPEGWTGGVGFVTKEMIEEAMPSSGVGSANHGEGHKVLMCGPPPMITAMKGHLAQIGYPAPRSVSKLEDQVFLF.

The helical transmembrane segment at proline 13 to phenylalanine 33 threads the bilayer. The FAD-binding FR-type domain maps to valine 44–threonine 147. Residues serine 127–glycine 142 and histidine 153–leucine 185 contribute to the FAD site.

This sequence belongs to the flavoprotein pyridine nucleotide cytochrome reductase family. Monomer. Component of the 2-(3-amino-3-carboxypropyl)histidine synthase complex composed of DPH1, DPH2, DPH3 and a NADH-dependent reductase, predominantly CBR1. Requires FAD as cofactor.

Its subcellular location is the mitochondrion outer membrane. It catalyses the reaction 2 Fe(III)-[cytochrome b5] + NADH = 2 Fe(II)-[cytochrome b5] + NAD(+) + H(+). The catalysed reaction is 2 Fe(3+)-[Dph3] + NADH = 2 Fe(2+)-[Dph3] + NAD(+) + H(+). It functions in the pathway protein modification; peptidyl-diphthamide biosynthesis. In terms of biological role, NADH-dependent reductase for DPH3 and cytochrome b5. Required for the first step of diphthamide biosynthesis, a post-translational modification of histidine which occurs in elongation factor 2. DPH1 and DPH2 transfer a 3-amino-3-carboxypropyl (ACP) group from S-adenosyl-L-methionine (SAM) to a histidine residue, the reaction is assisted by a reduction system comprising DPH3 and a NADH-dependent reductase, predominantly CBR1. By reducing DPH3, also involved in the formation of the tRNA wobble base modification mcm5s 2U (5-methoxycarbonylmethyl-2-thiouridine), mediated by the elongator complex. The cytochrome b5/NADH cytochrome b5 reductase electron transfer system supports the catalytic activity of several sterol biosynthetic enzymes. The sequence is that of NADH-cytochrome b5 reductase 1 (CBR1) from Cryptococcus neoformans var. neoformans serotype D (strain B-3501A) (Filobasidiella neoformans).